A 1158-amino-acid polypeptide reads, in one-letter code: MHAFCVGQYLEPDQEGVTIPDLGSLSSPLIDTERNLGLLLGLHASYLAMSTPLSPVEIECAKWLQSSIFSGGLQTSQIHYSYNEEKDEDHCSSPGGTPASKSRLCSHRRALGDHSQAFLQAIADNNIQDHNVKDFLCQIERYCRQCHLTTPIMFPPEHPVEEVGRLLLCCLLKHEDLGHVALSLVHAGALGIEQVKHRTLPKSVVDVCRVVYQAKCSLIKTHQEQGRSYKEVCAPVIERLRFLFNELRPAVCNDLSIMSKFKLLSSLPHWRRIAQKIIREPRKKRVPKKPESTDDEEKIGNEESDLEEACILPHSPINVDKRPIAIKSPKDKWQPLLSTVTGVHKYKWLKQNVQGLYPQSPLLSTIAEFALKEEPVDVEKRKCLLKQLERAEVRLEGIDTILKLYLVSKNFLLPSVPYAMFCGWQRLIPEGIDIGEPLTDCLKDVDLIPPFNRMLLEVTFGKLYAWAVQNIRNVLVDASAKFKELGIQPVPLQTITNENPSGPSLGTIPQAHFLLVMLSMLTLQHSANNLDLLLNSGTLALAQTALRLIGPSCDSVEEDMNASAQGASATVLEETRKETAPVQLPVSGPELAAMMKIGTRVMRGVDWKWGDQDRPPPGLGRVIGELGEDGWIRVQWDTGSTNSYRMGKEGNYDLKLAELPAPAQPSAEDSDTEDDSEAEQTERNIHPTAMMFTSTINLLQTLCLSAGVHAEIMQSEATKTLCGLLQMLVYREQHRSWCTLGFVQSIALTLQVCGTLSSLQWITLLMKVVEGHAPFTATSLQRQILAVHLLQAVLPSWDKTERARDMKCLMEKLFDFLGSLLTMCSSDVPLLRESTLRRRRVCPQASLTATHSSTLAEEVVALLHTLHSLTQWNGLINKYINSQLRSITHSFAGRPSKGAQLEDYFPDSENPEVGGLMAVLAVVGGIDGRLCLGGQVVHDDFGEVTMTRITLKGKITVQFSDMRTCHVCPLNQLKPLPAVAFNVNNLPFTEPMLSVWAQLVNLAGSKLEKHKIKKSTKQAFAGQVDLDLLRCQQLKLYILKAGRALFSHQDKLRQILSQPAVQETGTVHTDDGAVVSPDLGDMSPEGPQPPMILLQQLLASATQPSPVKAIFDKQELEERMSRCCFWRRRTTKLEQILLFIRRMNSVCEKENTNATASN.

Positions 281-302 (PRKKRVPKKPESTDDEEKIGNE) are disordered. Positions 293–302 (TDDEEKIGNE) are enriched in acidic residues. The MIB/HERC2 domain maps to 587-660 (SGPELAAMMK…NYDLKLAELP (74 aa)). A disordered region spans residues 662–684 (PAQPSAEDSDTEDDSEAEQTERN). The span at 668–679 (EDSDTEDDSEAE) shows a compositional bias: acidic residues.

This is Putative HERC2-like protein 3 (HERC2P3) from Homo sapiens (Human).